The sequence spans 387 residues: MKTVSIFGSTGAIGQMIIDVILASSDSYQVKALVAKSNVQLLAFQAKVVNAEMVVIADVGLYKELKDLLFGTNVKISVGDVGMQMAASLNVDYVMMAIVGIAALVPMVYLISAGVKVIALANKESVVCGGTLLFNLAREKNVNIIPVDSEHNAIFQILHSNDRENIDKITITGSGGALLYMDHDQMRNITVQETIKHPVWKMGKKISIDSATMVNKSLEIIEAYHLFSVKSEKLDVIIHPEAIVHGIVSYVDGACIAFMSVPDMKISIMYTLSWPNRMSMLYKKLNLASYHQLTFMKPDINKFPGIRLGFEILRTSNIHANSIIFNTANEVAVDAFLNRKIGFLDIVNVIYSTLDMVDCLHINSLSDILECDSIARRVASDIICKLN.

NADPH contacts are provided by threonine 10, glycine 11, isoleucine 13, asparagine 38, and asparagine 122. Lysine 123 contributes to the 1-deoxy-D-xylulose 5-phosphate binding site. Glutamate 124 provides a ligand contact to NADPH. Position 148 (aspartate 148) interacts with Mn(2+). 1-deoxy-D-xylulose 5-phosphate-binding residues include serine 149, glutamate 150, serine 174, and histidine 197. Mn(2+) is bound at residue glutamate 150. NADPH is bound at residue glycine 203. Residues serine 210, asparagine 215, lysine 216, and glutamate 219 each contribute to the 1-deoxy-D-xylulose 5-phosphate site. Residue glutamate 219 coordinates Mn(2+).

This sequence belongs to the DXR family. Mg(2+) serves as cofactor. It depends on Mn(2+) as a cofactor.

The catalysed reaction is 2-C-methyl-D-erythritol 4-phosphate + NADP(+) = 1-deoxy-D-xylulose 5-phosphate + NADPH + H(+). It functions in the pathway isoprenoid biosynthesis; isopentenyl diphosphate biosynthesis via DXP pathway; isopentenyl diphosphate from 1-deoxy-D-xylulose 5-phosphate: step 1/6. In terms of biological role, catalyzes the NADPH-dependent rearrangement and reduction of 1-deoxy-D-xylulose-5-phosphate (DXP) to 2-C-methyl-D-erythritol 4-phosphate (MEP). This chain is 1-deoxy-D-xylulose 5-phosphate reductoisomerase, found in Ehrlichia ruminantium (strain Gardel).